A 205-amino-acid polypeptide reads, in one-letter code: ATP phosphoribosyltransferase (205 aa).

Belongs to the ATP phosphoribosyltransferase family. Short subfamily. As to quaternary structure, heteromultimer composed of HisG and HisZ subunits.

It is found in the cytoplasm. The enzyme catalyses 1-(5-phospho-beta-D-ribosyl)-ATP + diphosphate = 5-phospho-alpha-D-ribose 1-diphosphate + ATP. It participates in amino-acid biosynthesis; L-histidine biosynthesis; L-histidine from 5-phospho-alpha-D-ribose 1-diphosphate: step 1/9. Its function is as follows. Catalyzes the condensation of ATP and 5-phosphoribose 1-diphosphate to form N'-(5'-phosphoribosyl)-ATP (PR-ATP). Has a crucial role in the pathway because the rate of histidine biosynthesis seems to be controlled primarily by regulation of HisG enzymatic activity. The protein is ATP phosphoribosyltransferase of Ruthia magnifica subsp. Calyptogena magnifica.